An 85-amino-acid polypeptide reads, in one-letter code: Large ribosomal subunit protein bL27 (85 aa).

Residues 1–21 (MAHKKAAGSTKNGRDSNAKRL) are disordered.

Belongs to the bacterial ribosomal protein bL27 family.

In Hydrogenovibrio crunogenus (strain DSM 25203 / XCL-2) (Thiomicrospira crunogena), this protein is Large ribosomal subunit protein bL27.